Here is a 159-residue protein sequence, read N- to C-terminus: Ecotin (159 aa).

Residues 1–22 (MRPTPMTAILALTLAAAAPAMA) form the signal peptide. A disulfide bond links cysteine 68 and cysteine 105.

Belongs to the protease inhibitor I11 (ecotin) family. In terms of assembly, homodimer.

Its subcellular location is the periplasm. In terms of biological role, general inhibitor of family S1 serine proteases. This chain is Ecotin, found in Pseudomonas putida (strain GB-1).